The primary structure comprises 530 residues: Pentatricopeptide repeat-containing protein At5g56310 (530 aa).

10 PPR repeats span residues 77–114, 115–149, 150–180, 181–211, 214–248, 249–283, 284–314, 315–349, 350–380, and 386–420; these read NTYLHNTMIRALSLLDEPNAHSIAITVYRKLWALCAKP, DTFTFPFVLKIAVRVSDVWFGRQIHGQVVVFGFDS, SVHVVTGLIQMYFSCGGLGDARKMFDEMLVK, DVNVWNALLAGYGKVGEMDEARSLLEMMPCW, NEVSWTCVISGYAKSGRASEAIEVFQRMLMENVEP, DEVTLLAVLSACADLGSLELGERICSYVDHRGMNR, AVSLNNAVIDMYAKSGNITKALDVFECVNER, NVVTWTTIIAGLATHGHGAEALAMFNRMVKAGVRP, NDVTFIAILSACSHVGWVDLGKRLFNSMRSK, and NIEHYGCMIDLLGRAGKLREADEVIKSMPFKANAA. The interval 421–496 is type E motif; that stretch reads IWGSLLAASN…MAGESSIEVE (76 aa). Residues 497–527 form a type E(+) motif region; the sequence is NRVYKFISGDLTHPQVERIHEILQEMDLQIQ.

Belongs to the PPR family. PCMP-E subfamily.

The chain is Pentatricopeptide repeat-containing protein At5g56310 (PCMP-E13) from Arabidopsis thaliana (Mouse-ear cress).